The primary structure comprises 220 residues: 14-3-3-like protein (220 aa).

It belongs to the 14-3-3 family.

This is 14-3-3-like protein from Spinacia oleracea (Spinach).